A 166-amino-acid chain; its full sequence is 3-hydroxyacyl-[acyl-carrier-protein] dehydratase FabZ (166 aa).

Histidine 72 is a catalytic residue.

It belongs to the thioester dehydratase family. FabZ subfamily.

It localises to the cytoplasm. The catalysed reaction is a (3R)-hydroxyacyl-[ACP] = a (2E)-enoyl-[ACP] + H2O. Involved in unsaturated fatty acids biosynthesis. Catalyzes the dehydration of short chain beta-hydroxyacyl-ACPs and long chain saturated and unsaturated beta-hydroxyacyl-ACPs. The polypeptide is 3-hydroxyacyl-[acyl-carrier-protein] dehydratase FabZ (Synechococcus sp. (strain JA-2-3B'a(2-13)) (Cyanobacteria bacterium Yellowstone B-Prime)).